We begin with the raw amino-acid sequence, 496 residues long: Galactokinase (496 aa).

A2 carries the post-translational modification N-acetylalanine. Residues R56, E62, H63, and D65 each coordinate alpha-D-galactose. Residues G161, G163, S165, and S166 each contribute to the ATP site. Residue D210 coordinates alpha-D-galactose. D210 (proton acceptor) is an active-site residue. Positions 252, 253, and 254 each coordinate ATP. Y262 lines the alpha-D-galactose pocket.

Belongs to the GHMP kinase family. GalK subfamily. It depends on Mg(2+) as a cofactor. Requires Mn(2+) as cofactor. Ca(2+) is required as a cofactor. As to expression, expressed in roots, stems, leaves, flowers and young siliques. Higher expression in the elongating middle stem region than in the lower or upper stem region.

The enzyme catalyses alpha-D-galactose + ATP = alpha-D-galactose 1-phosphate + ADP + H(+). It participates in carbohydrate metabolism; galactose metabolism. Sugar-1-kinase with a very high substrate specificity for the alpha-anomeric configuration of D-galacose (D-Gal). Also efficiently converts 2-deoxy-D-Gal to 2-deoxy-D-al-1-phosphate. In Arabidopsis thaliana (Mouse-ear cress), this protein is Galactokinase (GAL1).